The primary structure comprises 542 residues: CTP synthase (542 aa).

The amidoligase domain stretch occupies residues 1 to 265 (MARYVFITGG…DSEVLSAFGI (265 aa)). Residue Ser-13 coordinates CTP. Position 13 (Ser-13) interacts with UTP. Position 14–19 (14–19 (SLGKGI)) interacts with ATP. Tyr-54 lines the L-glutamine pocket. Asp-71 serves as a coordination point for ATP. Positions 71 and 139 each coordinate Mg(2+). CTP contacts are provided by residues 146 to 148 (DIE), 186 to 191 (KTKPTQ), and Lys-222. Residues 186 to 191 (KTKPTQ) and Lys-222 contribute to the UTP site. The 251-residue stretch at 291-541 (TIAVVGKYTG…IEAAIEQSRL (251 aa)) folds into the Glutamine amidotransferase type-1 domain. Gly-353 contributes to the L-glutamine binding site. Catalysis depends on Cys-380, which acts as the Nucleophile; for glutamine hydrolysis. L-glutamine contacts are provided by residues 381–384 (FGMQ), Glu-404, and Arg-469. Residues His-514 and Glu-516 contribute to the active site.

Belongs to the CTP synthase family. Homotetramer.

It catalyses the reaction UTP + L-glutamine + ATP + H2O = CTP + L-glutamate + ADP + phosphate + 2 H(+). The enzyme catalyses L-glutamine + H2O = L-glutamate + NH4(+). The catalysed reaction is UTP + NH4(+) + ATP = CTP + ADP + phosphate + 2 H(+). It functions in the pathway pyrimidine metabolism; CTP biosynthesis via de novo pathway; CTP from UDP: step 2/2. With respect to regulation, allosterically activated by GTP, when glutamine is the substrate; GTP has no effect on the reaction when ammonia is the substrate. The allosteric effector GTP functions by stabilizing the protein conformation that binds the tetrahedral intermediate(s) formed during glutamine hydrolysis. Inhibited by the product CTP, via allosteric rather than competitive inhibition. In terms of biological role, catalyzes the ATP-dependent amination of UTP to CTP with either L-glutamine or ammonia as the source of nitrogen. Regulates intracellular CTP levels through interactions with the four ribonucleotide triphosphates. In Brucella melitensis biotype 2 (strain ATCC 23457), this protein is CTP synthase.